The sequence spans 583 residues: Orphan steroid hormone receptor 2 (583 aa).

A DNA-binding region (nuclear receptor) is located at residues 84-159 (IELCAVCGDK…MGMKSDSVQC (76 aa)). 2 NR C4-type zinc fingers span residues 87–107 (CAVC…CEGC) and 123–142 (CRGN…CQYC). One can recognise an NR LBD domain in the interval 248 to 563 (TLASVVTSLA…SIIPYILRME (316 aa)).

It belongs to the nuclear hormone receptor family. NR2 subfamily. As to quaternary structure, binds DNA as a monomer. Expressed uniformly in the early embryo. In contrast, larval expression is localized to the epaulettes and mouth epithelium. Expressed in multiple adult organs including lantern muscle, tubefeet, intestine, coelomocytes and gonads. In the adult ovaries and testes, expression is specifically localized to the smooth muscle epithelial layer of cells which surround the ovarioles and acini, respectively (at protein level).

The protein resides in the cytoplasm. The protein localises to the nucleus. Functionally, orphan nuclear receptor. Binds to the hormone response element in the upstream promoter region of the CYIIIB gene in vitro. Both isoform 1 and isoform 2 bind DNA. This Strongylocentrotus purpuratus (Purple sea urchin) protein is Orphan steroid hormone receptor 2.